Reading from the N-terminus, the 502-residue chain is Neuronal acetylcholine receptor subunit alpha-7 (502 aa).

Residues 1–22 (MRCSPGGVWLALAASLLHVSLQ) form the signal peptide. The Extracellular segment spans residues 23 to 233 (GEFQRKLYKE…VTMRRRTLYY (211 aa)). Arg-42 and Val-44 together coordinate Ca(2+). Asn-46, Asn-90, and Asn-133 each carry an N-linked (GlcNAc...) asparagine glycan. A disulfide bridge connects residues Cys-150 and Cys-164. Ca(2+)-binding residues include Ser-172 and Tyr-210. An intrachain disulfide couples Cys-212 to Cys-213. The next 3 membrane-spanning stretches (helical) occupy residues 234–254 (GLNL…VFLL), 259–279 (GEKI…MLLV), and 292–315 (LIAQ…VIVL). Residues 260-267 (EKISLGIT) form an essential for TMEM35A/NACHO-mediated proper subunit assembly and trafficking to cell membrane region. Over 316–466 (QYHHHDPDGG…CSEWKFAACV (151 aa)) the chain is Cytoplasmic. The helical transmembrane segment at 467–489 (VDRLCLMAFSVFTIICTIGILMS) threads the bilayer.

It belongs to the ligand-gated ion channel (TC 1.A.9) family. Acetylcholine receptor (TC 1.A.9.1) subfamily. Alpha-7/CHRNA7 sub-subfamily. As to quaternary structure, homopentamer. Can also form heteropentamers with CHRNB2, mainly found in basal forebrain cholinergic neurons. Interacts with RIC3; which is required for proper folding and assembly. Interacts with LYPD6. Interacts with CANX. Post-translationally, glycosylations at Asn-46, Asn-90 and Asn-133 are essential for TMEM35A/NACHO-mediated proper subunit assembly and trafficking to the cell membrane. As to expression, expressed in neuronal cells. Expressed in macrophages (at protein level).

The protein localises to the postsynaptic cell membrane. It is found in the cell membrane. The catalysed reaction is Ca(2+)(in) = Ca(2+)(out). It catalyses the reaction K(+)(in) = K(+)(out). It carries out the reaction Na(+)(in) = Na(+)(out). The enzyme catalyses choline(out) = choline(in). The catalysed reaction is NH4(+)(in) = NH4(+)(out). It catalyses the reaction L-arginine(in) = L-arginine(out). It carries out the reaction guanidine(out) = guanidine(in). Its activity is regulated as follows. Activated by a myriad of ligands such as acetylcholine, cytisine, nicotine, choline and epibatidine. Oligomeric amyloid-beta protein 42 activates specifially CHRNA7:CHRNB2 nAchRs. Activity is modulated by positive allosteric modulators (PAMs), such as flavonoids, with a wide range of chemical diversity, pharmacological sensitivity and efficacy. AChR activity is inhibited by the antagonists alpha-conotoxons RgIA, ImI and ImII, small disulfide-constrained peptides from cone snails. Alpha-conotoxin PnIC selectively inhibits CHRNA7:CHRNB2 over CHRNA7 homopentamer. Functionally, component of neuronal acetylcholine receptors (nAChRs) that function as pentameric, ligand-gated cation channels with high calcium permeability among other activities. nAChRs are excitatory neurotrasnmitter receptors formed by a collection of nAChR subunits known to mediate synaptic transmission in the nervous system and the neuromuscular junction. Each nAchR subunit confers differential attributes to channel properties, including activation, deactivation and desensitization kinetics, pH sensitivity, cation permeability, and binding to allosteric modulators. CHRNA7 forms homopentameric neuronal acetylcholine receptors abundantly expressed in the central nervous system, characterized by fast desensitization and high calcium permeability. Also forms heteropentamers with CHRNB2, mainly expressed in basal forebrain cholinergic neurons. Involved in the modulation of calcium-dependent signaling pathways and influences the release of neurotransmitters, including dopamine, glutamate and GABA. Also expressed in non-neuronal cells such as immune cells like lymphocytes, monocytes and macrophages. In T cells, activation induces metabotropic signaling that results in an increase of intracellular Ca2+ concentrations, independent of ionotropic receptor functions. In macrophages, required for acetylcholine-mediated inhibition of TNF and other inflammatory cytokine release. Once activated by acetylcholine, nicotine or other agonists, selectively inhibits production of pro-inflammatory cytokines while leaving anti-inflammatory cytokines undisturbed. Stimulates the cholinergic anti-inflammatory pathway, controlling inflammation by inhibiting NFKB nuclear translocation and activating the JAK2-STAT3 pathway, independently of ion channel activity. Also expressed in the urothelium where it modulates reflex bladder activity by increasing intracellular calcium through internal stores and decreasing basal ATP release. This Homo sapiens (Human) protein is Neuronal acetylcholine receptor subunit alpha-7.